The sequence spans 304 residues: D-tagatose-1-phosphate kinase (304 aa).

Aspartate 250 serves as the catalytic Proton acceptor.

This sequence belongs to the carbohydrate kinase PfkB family. The cofactor is Mg(2+).

The catalysed reaction is alpha-D-tagatopyranose 1-phosphate + ATP = D-tagatofuranose 1,6-bisphosphate + ADP + H(+). Its pathway is carbohydrate degradation. In terms of biological role, kinase involved in a D-tagatose catabolic pathway. Catalyzes the phosphorylation of D-tagatose-1-phosphate (Tag-1P) to D-tagatose-1,6-bisphosphate. The polypeptide is D-tagatose-1-phosphate kinase (Klebsiella oxytoca).